The following is a 2056-amino-acid chain: E3 ubiquitin-protein ligase TRIP12 (2056 aa).

Composition is skewed to polar residues over residues 1-10 (MSSRPNNNPG) and 18-27 (RNTAGAQPQE). Residues 1-440 (MSSRPNNNPG…SGESESDDSE (440 aa)) are disordered. A compositionally biased stretch (basic and acidic residues) spans 39–51 (AENKTHSLPESRK). Composition is skewed to polar residues over residues 58–67 (KVQSNTTSGP) and 153–168 (SQEQ…STSK). Composition is skewed to low complexity over residues 213–226 (LSKL…SAKA) and 234–253 (SSSS…VSAA). Polar residues-rich tracts occupy residues 317 to 327 (PGSSKTETSKP) and 363 to 375 (QKTT…TSRR). Over residues 383 to 395 (AAAEARRQEKMAD) the composition is skewed to basic and acidic residues. The span at 415-433 (GAAASSSVAGAVGMTTSGE) shows a compositional bias: low complexity. A WWE domain is found at 791–905 (MLKKGNAQNT…DPELAKSFIK (115 aa)). Low complexity predominate over residues 1027–1042 (TTISTGSGTASGNSAA). Disordered stretches follow at residues 1027-1147 (TTIS…ASKD), 1465-1500 (EEEE…DELW), and 1632-1651 (TNPE…PRLD). Over residues 1069–1082 (KRKRLPKRGPRRPK) the composition is skewed to basic residues. The span at 1085 to 1094 (PPRDEDKVDN) shows a compositional bias: basic and acidic residues. 2 stretches are compositionally biased toward polar residues: residues 1095-1106 (QAKSPTTTQSPK) and 1119-1129 (RLSTQSNSNNI). The K-box stretch occupies residues 1560–1634 (EIIPTSEFNN…AMQRLLDTNP (75 aa)). An HECT domain is found at 1949–2056 (PDHGYTHDSR…REGQQSFHLS (108 aa)). The active-site Glycyl thioester intermediate is the Cys2023.

Belongs to the UPL family. K-HECT subfamily.

The protein localises to the nucleus. The protein resides in the nucleoplasm. It carries out the reaction S-ubiquitinyl-[E2 ubiquitin-conjugating enzyme]-L-cysteine + [acceptor protein]-L-lysine = [E2 ubiquitin-conjugating enzyme]-L-cysteine + N(6)-ubiquitinyl-[acceptor protein]-L-lysine.. Its pathway is protein modification; protein ubiquitination. E3 ubiquitin-protein ligase involved in ubiquitin fusion degradation (UFD) pathway and regulation of DNA repair. Part of the ubiquitin fusion degradation (UFD) pathway, a process that mediates ubiquitination of protein at their N-terminus, regardless of the presence of lysine residues in target proteins. Acts as a key regulator of DNA damage response by acting as a suppressor of RNF168, an E3 ubiquitin-protein ligase that promotes accumulation of 'Lys-63'-linked histone H2A and H2AX at DNA damage sites, thereby acting as a guard against excessive spreading of ubiquitinated chromatin at damaged chromosomes. The protein is E3 ubiquitin-protein ligase TRIP12 (trip12) of Xenopus tropicalis (Western clawed frog).